The chain runs to 618 residues: MAKHTFQTEVNQLLDLMIHSLYSNKEIFLRELISNASDALEKLQYLTLTDENLKNLQYTPRIDIHFDEEKKILTLSDTGIGMNESDLVENLGTIAKSGTKSFVSRLSGDKKKDSALIGQFGVGFYAAFMVADKIVVTTKKAGEESAYAWLSEGKGDYEITPCSKESHGTEIKLFLKEEEKEFASRWRLEEIIKKYSDHIPFPIFLHYTQKKNDQEESKEEQVNKAFALWRISKNELKEEDYKEFYKSLSHDSHDPLAWVHIKVEGSQEYTTLFYLPSKAPFDLYRVDYRSGVKLYVKRVFITDDDKELLPSYLRFVRGIIDSEDLPLNVSREILQQNRILANIKSASTKKILAEIENLAKDEEKYEAFFKEFGRALKEGLYGDFENKEKLLELMRFHSSLSPNKKISLQSYKERMKEGQKAIYYLMGENADLLQNSPLLEKFKKREIEVLFFDEEIDSIVMPMVNQYGDLPLKAINSAEADKDFEEESVSEEEKERFKPLLERFEKALSGEIKSVRLSKRLVDSPACVVADEDDPNFAMIKMMRQMGNALGDFPEPKPILELNPEHPMVGKLLALEDEERASDYAHLLLDQAKLLESGSLKDAVGFAKRLNAMLERAI.

An a; substrate-binding region spans residues 1–331; sequence MAKHTFQTEV…SEDLPLNVSR (331 aa). Positions 332 to 541 are b; that stretch reads EILQQNRILA…EDDPNFAMIK (210 aa). Positions 542–618 are c; sequence MMRQMGNALG…RLNAMLERAI (77 aa).

It belongs to the heat shock protein 90 family. Homodimer.

Its subcellular location is the cytoplasm. Molecular chaperone. Has ATPase activity. The protein is Chaperone protein HtpG of Wolinella succinogenes (strain ATCC 29543 / DSM 1740 / CCUG 13145 / JCM 31913 / LMG 7466 / NCTC 11488 / FDC 602W) (Vibrio succinogenes).